The primary structure comprises 346 residues: Growth hormone-inducible transmembrane protein (346 aa).

The transit peptide at 1-45 (MLAARLVCLRTLPSRVFQPTFITKASPLVKNSITKNQWLVTPSRE) directs the protein to the mitochondrion. The Mitochondrial matrix portion of the chain corresponds to 46–83 (YATKTRIRTHRGKTGQELKEAALEPSMEKIFKIDQMGR). A helical transmembrane segment spans residues 84–104 (WFVAGGAAVGLGALCYYGLGM). Residues 105–126 (SNEIGAIEKAVIWPQYVKDRIH) lie on the Mitochondrial intermembrane side of the membrane. A helical transmembrane segment spans residues 127 to 147 (STYMYLAGSIGLTALSALAVA). Over 148 to 160 (RTPALMNFMMTGS) the chain is Mitochondrial matrix. A helical transmembrane segment spans residues 161–181 (WVTIGATFAAMIGAGMLVHSI). At 182–191 (SYEQSPGPKH) the chain is on the mitochondrial intermembrane side. Residues 192–212 (LAWMLHSGVMGAVVAPLTILG) traverse the membrane as a helical segment. Residues 213-214 (GP) are Mitochondrial matrix-facing. The chain crosses the membrane as a helical span at residues 215–235 (LLLRAAWYTAGIVGGLSTVAM). Residues 236–245 (CAPSEKFLNM) lie on the Mitochondrial intermembrane side of the membrane. The chain crosses the membrane as a helical span at residues 246 to 266 (GAPLGVGLGLVFASSLGSMFL). The Mitochondrial matrix segment spans residues 267 to 272 (PPTSVA). The helical transmembrane segment at 273 to 293 (GATLYSVAMYGGLVLFSMFLL) threads the bilayer. Topologically, residues 294–346 (YDTQKVIKRAEITPMYGAQKYDPINSMLTIYMDTLNIFMRVATMLATGSNRKK) are mitochondrial intermembrane.

The protein belongs to the BI1 family. Interacts with LETM1 and AFG3L2. Undergoes AFG3L2-mediated proteolytic degradation, upon hyperpolarization of mitochondria.

It is found in the mitochondrion inner membrane. The catalysed reaction is Ca(2+)(in) + 2 H(+)(out) = Ca(2+)(out) + 2 H(+)(in). It carries out the reaction K(+)(in) + H(+)(out) = K(+)(out) + H(+)(in). In terms of biological role, plays an important role in maintenance of mitochondrial morphology and in mediating either calcium or potassium/proton antiport. Mediates proton-dependent calcium efflux from mitochondrion. Also functions as an electroneutral mitochondrial proton/potassium exchanger. Required for the mitochondrial tubular network and cristae organization. Involved in apoptotic release of cytochrome c. Inhibits AFG3L2 proteolytic activity, stimulating respiration and stabilizing respiratory enzymes in actively respiring mitochondria. However, when mitochondria become hyperpolarized, GHITM loses its inhibitory activity toward AFG3L2 and the now active AFG3L2 turns first on GHITM and, if hyperpolarization persists, on other proteins of the mitochondria, leading to a broad remodeling of the mitochondrial proteome. The sequence is that of Growth hormone-inducible transmembrane protein (Ghitm) from Mus musculus (Mouse).